A 153-amino-acid polypeptide reads, in one-letter code: Transcriptional repressor NrdR (153 aa).

The segment at 3–34 (CPFCHNQDTRVIDSRAAEEGTAIRRRRSCPAC) is a zinc-finger region. The ATP-cone domain occupies 46-136 (LMVTKRSGAT…VYRSFESLED (91 aa)).

This sequence belongs to the NrdR family. Zn(2+) is required as a cofactor.

Its function is as follows. Negatively regulates transcription of bacterial ribonucleotide reductase nrd genes and operons by binding to NrdR-boxes. This chain is Transcriptional repressor NrdR, found in Thermobifida fusca (strain YX).